The primary structure comprises 339 residues: GTPase Obg (339 aa).

An Obg domain is found at methionine 1 to leucine 159. Positions asparagine 127–glycine 147 are disordered. The region spanning alanine 160–glutamate 333 is the OBG-type G domain. Residues glycine 166–serine 173, phenylalanine 191–tyrosine 195, aspartate 213–glycine 216, asparagine 283–aspartate 286, and serine 314–isoleucine 316 contribute to the GTP site. 2 residues coordinate Mg(2+): serine 173 and threonine 193.

It belongs to the TRAFAC class OBG-HflX-like GTPase superfamily. OBG GTPase family. As to quaternary structure, monomer. Requires Mg(2+) as cofactor.

The protein resides in the cytoplasm. An essential GTPase which binds GTP, GDP and possibly (p)ppGpp with moderate affinity, with high nucleotide exchange rates and a fairly low GTP hydrolysis rate. Plays a role in control of the cell cycle, stress response, ribosome biogenesis and in those bacteria that undergo differentiation, in morphogenesis control. This is GTPase Obg from Coxiella burnetii (strain CbuK_Q154) (Coxiella burnetii (strain Q154)).